Consider the following 575-residue polypeptide: MQLRDLAPRSPNVAAPPYNGLPPPHLLLGYQAMHRALNDYLFDNRVFMQIGYDSPPQRPRRLFWTCLTDCSYAVNVGQYMRFLDLDNFHGTFTQMHNAVLMDRVAADMGRAHLRGRGIDVGRHGQVLPQLDAEHHSLLSGNGAGGLQEGVLMRTASAADAELLAAIRQLRVALCHYLFCYAYDLFQTEERYRFLPGSDVFLEPNWLSYFAEAFAELDTQQLVRDAERKFRGRRDVEEPTETMARCFMSTLASDAVSLAGTGLSGGAITLCSRRVTDRTGLRPRDRHGRAITASEARRIRPRAVRAFVDRLPRVTRRRRRPPSPAPPPEEIEEAAMEVEEPEEEEEELLDEVIRTALEAIGALQDELSGAARRHELFRFANDFYRMLLTARDAGLMGESFLRKWVLYFFLAEHIASTLYYLYSHFIANREFRRYVDVLTLQVLVVGWDVNAQQVFKRIWSEQSNPATIFETLWERILRDFLMMVERTGQFEGMDDADQQLFLSDIQYRDRSGDIEEVLKQLNLSEELIDSIDISFRIKFKGIVAIATNEEIKANLRRVLRHRREDIEAAARRGQPL.

The Nuclear localization signal signature appears at 309-318; it reads RLPRVTRRRR. The segment at 314-340 is disordered; sequence TRRRRRPPSPAPPPEEIEEAAMEVEEP. The span at 328–340 shows a compositional bias: acidic residues; sequence EEIEEAAMEVEEP. Residue serine 510 is modified to O-(5'-phospho-DNA)-serine.

It belongs to the adenoviridae terminal protein family. Heterodimer with the polymerase; this heterodimer binds to bp 9 to 18 of the genome. Interacts with host POU2F1; POU2F1 binds to the auxiliary sequences in the inverted terminal repeats and tethers the pTP-POL heterodimer to the origin DNA thereby participating in the assembly of the pre-initiation complex (POL-TP-DBP-NFIA-POU2F1). In terms of processing, preterminal protein is used to replicate viral genome, upon genomic encapsidation it is processed first into iTP and finally into TP by adenovirus protease.

The protein localises to the host nucleus matrix. Functionally, protein covalently bound to the viral DNA that acts as a primer for viral genomic replication by DNA strand displacement. Assembles on the viral origin of replication in an initiation complex with viral polymerase, DBP, host NFIA and host POU2F1/OCT1. During initiation, the polymerase covalently couples the first dCTP with Ser-580 of pTP. The terminal protein stimulates the template activity over 20 fold compared to protein-free templates. Neo-synthesized viral genomes are linked to two preterminal proteins, one for each 5' end. These new genomes are encapsidated in the nucleus, and during capsid maturation by viral protease, preterminal protein is first cleaved into intermediary (iTP), then into mature TP. May play a role in host nuclear matrix localization of genomic DNA. This Fowl adenovirus A serotype 1 (strain CELO / Phelps) (FAdV-1) protein is Preterminal protein.